Consider the following 147-residue polypeptide: Cystatin-9-like (147 aa).

Positions 1 to 28 (MLGLPWKGGLSWALLLLLLGSQILLIYA) are cleaved as a signal peptide. The cysteines at positions 98 and 108 are disulfide-linked. Asparagine 117 and asparagine 139 each carry an N-linked (GlcNAc...) asparagine glycan. An intrachain disulfide couples cysteine 122 to cysteine 142.

The protein belongs to the cystatin family. Specifically expressed in testis.

Its subcellular location is the secreted. This is Cystatin-9-like (CST9L) from Homo sapiens (Human).